Reading from the N-terminus, the 157-residue chain is Protein Smg homolog (157 aa).

The protein belongs to the Smg family.

The chain is Protein Smg homolog from Idiomarina loihiensis (strain ATCC BAA-735 / DSM 15497 / L2-TR).